Consider the following 400-residue polypeptide: Nicotinate phosphoribosyltransferase (400 aa).

A Phosphohistidine; by autocatalysis modification is found at His220.

This sequence belongs to the NAPRTase family. Post-translationally, transiently phosphorylated on a His residue during the reaction cycle. Phosphorylation strongly increases the affinity for substrates and increases the rate of nicotinate D-ribonucleotide production. Dephosphorylation regenerates the low-affinity form of the enzyme, leading to product release.

It carries out the reaction nicotinate + 5-phospho-alpha-D-ribose 1-diphosphate + ATP + H2O = nicotinate beta-D-ribonucleotide + ADP + phosphate + diphosphate. It functions in the pathway cofactor biosynthesis; NAD(+) biosynthesis; nicotinate D-ribonucleotide from nicotinate: step 1/1. Catalyzes the synthesis of beta-nicotinate D-ribonucleotide from nicotinate and 5-phospho-D-ribose 1-phosphate at the expense of ATP. The chain is Nicotinate phosphoribosyltransferase from Escherichia coli (strain K12 / MC4100 / BW2952).